The chain runs to 315 residues: Protoheme IX farnesyltransferase 1 (315 aa).

Transmembrane regions (helical) follow at residues 25–45 (PGII…AAKG), 49–69 (LALM…GCAV), 87–107 (RVTV…LALG), 120–139 (ALAL…VYSL), 145–165 (SVYG…VGYC), 176–196 (AILL…IAIF), 220–240 (LHIV…PLAG), 242–262 (TGIA…AMAL), and 280–300 (GFSI…SQVI).

It belongs to the UbiA prenyltransferase family. Protoheme IX farnesyltransferase subfamily.

The protein localises to the cell inner membrane. The catalysed reaction is heme b + (2E,6E)-farnesyl diphosphate + H2O = Fe(II)-heme o + diphosphate. The protein operates within porphyrin-containing compound metabolism; heme O biosynthesis; heme O from protoheme: step 1/1. In terms of biological role, converts heme B (protoheme IX) to heme O by substitution of the vinyl group on carbon 2 of heme B porphyrin ring with a hydroxyethyl farnesyl side group. The chain is Protoheme IX farnesyltransferase 1 from Shewanella sp. (strain W3-18-1).